The chain runs to 304 residues: Acetylxylan esterase A (304 aa).

Residues 1–19 (MVKLQYLLSILLYAYSCTA) form the signal peptide. Ser147 functions as the Charge relay system in the catalytic mechanism. A glycan (N-linked (GlcNAc...) asparagine) is linked at Asn189.

Belongs to the carbohydrate esterase 1 (CE1) family. AxeA subfamily. As to quaternary structure, monomer.

Its subcellular location is the secreted. The enzyme catalyses Deacetylation of xylans and xylo-oligosaccharides.. Its pathway is glycan degradation; xylan degradation. Acetylxylan esterase involved in the hydrolysis of xylan, a major structural heterogeneous polysaccharide found in plant biomass representing the second most abundant polysaccharide in the biosphere, after cellulose. Degrades acetylated xylans by cleaving acetyl side groups from the hetero-xylan backbone. In Emericella nidulans (strain FGSC A4 / ATCC 38163 / CBS 112.46 / NRRL 194 / M139) (Aspergillus nidulans), this protein is Acetylxylan esterase A (axeA).